The sequence spans 153 residues: Peritrophin-1 (153 aa).

An N-terminal signal peptide occupies residues 1 to 17 (MKVSASLVLLLAAAVLA). Chitin-binding type-2 domains lie at 18–79 (DDRC…QCAP) and 92–153 (SPNC…QCEE). Disulfide bonds link Cys-56/Cys-69 and Cys-130/Cys-143. The N-linked (GlcNAc...) asparagine glycan is linked to Asn-63.

Post-translationally, glycosylated. In terms of tissue distribution, adult peritrophic membrane.

Binds chitin but not cellulose. May be involved in the spatial organization of PM. This Anopheles gambiae (African malaria mosquito) protein is Peritrophin-1 (Aper1).